Consider the following 145-residue polypeptide: Aegerolysin Aa-Pri1 (145 aa).

Positions 1–8 are excised as a propeptide; the sequence is MDSNKDER.

Belongs to the aegerolysin family.

The protein is Aegerolysin Aa-Pri1 (AA-PRI1) of Cyclocybe aegerita (Black poplar mushroom).